Reading from the N-terminus, the 471-residue chain is Exoglucanase 2 (471 aa).

The signal sequence occupies residues 1-18; the sequence is MIVGILTTLATLATLAAS. Residues 19–24 constitute a propeptide that is removed on maturation; it reads VPLEER. Gln25 carries the post-translational modification Pyrrolidone carboxylic acid. Residues 26–62 form the CBM1 domain; sequence ACSSVWGQCGGQNWSGPTCCASGSTCVYSNDYYSQCL. Residues 64–101 are compositionally biased toward low complexity; that stretch reads GAASSSSSTRAASTTSRVSPTTSRSSSATPPPGSTTTR. The tract at residues 64–108 is disordered; that stretch reads GAASSSSSTRAASTTSRVSPTTSRSSSATPPPGSTTTRVPPVGSG. The interval 66–106 is linker; that stretch reads ASSSSSTRAASTTSRVSPTTSRSSSATPPPGSTTTRVPPVG. The segment at 107-471 is catalytic; that stretch reads SGTATYSGNP…LLTNANPSFL (365 aa). O-linked (Man...) threonine glycans are attached at residues Thr111 and Thr121. Ser130, Ser133, Ser134, and Ser139 each carry an O-linked (Man...) serine glycan. The O-linked (Man...) threonine glycan is linked to Thr146. Residues Cys200 and Cys259 are joined by a disulfide bond. The active-site Proton donor is Asp245. N-linked (GlcNAc) asparagine glycosylation is present at Asn313. N-linked (GlcNAc...) (high mannose) asparagine glycosylation occurs at Asn334. Cys392 and Cys439 form a disulfide bridge.

Belongs to the glycosyl hydrolase 6 (cellulase B) family. Asn-334 contains mainly a high-mannose-type glycan (Hex(7-9)GlcNAc(2)) in a 3:1 ration with a single GlcNAc. Asn-313 was primarily unglycosylated with a small fraction (18%) bearing a single GlcNAc at this site.

It localises to the secreted. It catalyses the reaction Hydrolysis of (1-&gt;4)-beta-D-glucosidic linkages in cellulose and cellotetraose, releasing cellobiose from the non-reducing ends of the chains.. Functionally, exocellobiohydrolases (CBH) that catalyzes the hydrolysis of 1,4-beta-D-glucosidic bonds in cellulose to release the disaccharide cellobiose. The degradation of cellulose involves an interplay between different cellulolytic enzymes. Hydrolysis starts with endoglucanases (EGs), which cut internal beta-1,4-glucosidic bonds in cellulose to reduce the polymerization degree of the substrate and create new chain ends for exocellobiohydrolases (CBHs). The CBHs release the disaccharide cellobiose from the non-reducing end of the cellulose polymer chain. Finally, beta-1,4-glucosidases hydrolyze the cellobiose and other short cello-oligosaccharides into glucose units. The sequence is that of Exoglucanase 2 (cbh2) from Hypocrea jecorina (Trichoderma reesei).